Consider the following 827-residue polypeptide: NT-3 growth factor receptor (827 aa).

The signal sequence occupies residues 1-31; sequence MDVSLCPTKCTFWRVFLLWSIWGDYLLSVLA. Cystine bridges form between Cys-32–Cys-38 and Cys-36–Cys-45. Residues 32–430 lie on the Extracellular side of the membrane; sequence CPANCLCSKT…ITVTHKPEED (399 aa). Asn-68, Asn-72, and Asn-79 each carry an N-linked (GlcNAc...) asparagine glycan. 2 LRR repeats span residues 104-125 and 128-149; these read GLQR…AFAK and HLRY…LFQT. Residues 160–209 enclose the LRRCT domain; that stretch reads NPFNCSCDIRWIQLWQEKGEANLQSQQLHCMNLDTAVILLRNMNITQCDL. Asn-163 is a glycosylation site (N-linked (GlcNAc...) asparagine). Disulfide bonds link Cys-164–Cys-189 and Cys-166–Cys-207. N-linked (GlcNAc...) asparagine glycans are attached at residues Asn-203, Asn-218, Asn-232, Asn-259, Asn-267, Asn-272, and Asn-294. Ig-like C2-type domains lie at 210–300 and 319–382; these read PEIS…VLLT and HCIA…VATN. A disulfide bridge links Cys-231 with Cys-284. A disulfide bridge connects residues Cys-320 and Cys-362. Asn-375 and Asn-388 each carry an N-linked (GlcNAc...) asparagine glycan. Residues 431-455 traverse the membrane as a helical segment; sequence TFGVSIAVGLAAFACVLLVVLFIMI. Topologically, residues 456 to 827 are cytoplasmic; the sequence is NKYGRRSKFG…ATPIYLDILG (372 aa). Tyr-518 carries the phosphotyrosine; by autocatalysis modification. The Protein kinase domain occupies 540-812; it reads IVLKRELGEG…LNIKEIYKIL (273 aa). ATP is bound by residues 546–554 and Lys-574; that span reads LGEGAFGKV. Catalysis depends on Asp-681, which acts as the Proton acceptor. Phosphotyrosine; by autocatalysis is present on residues Tyr-707, Tyr-711, Tyr-712, and Tyr-822.

It belongs to the protein kinase superfamily. Tyr protein kinase family. Insulin receptor subfamily. In terms of assembly, exists in a dynamic equilibrium between monomeric (low affinity) and dimeric (high affinity) structures. Interacts with PTPRS. Ligand-mediated auto-phosphorylation.

The protein resides in the membrane. The enzyme catalyses L-tyrosyl-[protein] + ATP = O-phospho-L-tyrosyl-[protein] + ADP + H(+). Receptor tyrosine kinase involved in nervous system and probably heart development. Upon binding of its ligand NTF3/neurotrophin-3, NTRK3 autophosphorylates and activates different signaling pathways, including the phosphatidylinositol 3-kinase/AKT and the MAPK pathways, that control cell survival and differentiation. The KT and KD isoforms fail to stimulate transformation, process outgrowth or survival. Isoform KI25 exhibits tyrosine phosphorylation in the absence of ligand and is unable to mediate survival of neuronal cells. This Gallus gallus (Chicken) protein is NT-3 growth factor receptor (NTRK3).